Consider the following 523-residue polypeptide: MGVCFSAIRVTGASSSRRSSQTKSKAAPTPIDTKASTKRRTGSIPCGKRTDFGYSKDFHDHYTIGKLLGHGQFGYTYVAIHRPNGDRVAVKRLDKSKMVLPIAVEDVKREVQILIALSGHENVVQFHNAFEDDDYVYIVMELCEGGELLDRILSKKGNRYSEKDAAVVVRQMLKVAGECHLHGLVHRDMKPENFLFKSAQLDSPLKATDFGLSDFIKPGKRFHDIVGSAYYVAPEVLKRRSGPESDVWSIGVITYILLCGRRPFWDRTEDGIFKEVLRNKPDFSRKPWATISDSAKDFVKKLLVKDPRARLTAAQALSHAWVREGGNATDIPVDISVLNNLRQFVRYSRLKQFALRALASTLDEAEISDLRDQFDAIDVDKNGVISLEEMRQALAKDLPWKLKDSRVAEILEAIDSNTDGLVDFTEFVAAALHVHQLEEHDSEKWQLRSRAAFEKFDLDKDGYITPEELRMHTGLRGSIDPLLDEADIDRDGKISLHEFRRLLRTASISSQRAPSPAGHRNLR.

The N-myristoyl glycine moiety is linked to residue glycine 2. A lipid anchor (S-palmitoyl cysteine) is attached at cysteine 4. The interval 15–43 is disordered; it reads SSRRSSQTKSKAAPTPIDTKASTKRRTGS. The Protein kinase domain occupies 62–322; sequence YTIGKLLGHG…AAQALSHAWV (261 aa). ATP contacts are provided by residues 68–76 and lysine 91; that span reads LGHGQFGYT. The Proton acceptor role is filled by aspartate 188. 2 positions are modified to phosphoserine: serine 228 and serine 318. An autoinhibitory domain region spans residues 328–358; sequence ATDIPVDISVLNNLRQFVRYSRLKQFALRAL. EF-hand domains are found at residues 365–400, 402–437, 444–479, and 482–509; these read AEIS…DLPW, LKDS…VHQL, KWQL…RGSI, and LLDE…ASIS. Residues aspartate 378, aspartate 380, asparagine 382, glutamate 389, aspartate 415, asparagine 417, aspartate 419, glutamate 426, aspartate 457, aspartate 459, aspartate 461, tyrosine 463, glutamate 468, aspartate 487, aspartate 489, aspartate 491, and lysine 493 each contribute to the Ca(2+) site. Phosphoserine is present on serine 495. Glutamate 498 contacts Ca(2+). Serine 515 is subject to Phosphoserine.

Belongs to the protein kinase superfamily. Ser/Thr protein kinase family. CDPK subfamily. As to quaternary structure, interacts with BIK1. In terms of tissue distribution, expressed in vascular and meristematic tissues throughout plant development.

Its subcellular location is the cell membrane. It carries out the reaction L-seryl-[protein] + ATP = O-phospho-L-seryl-[protein] + ADP + H(+). It catalyses the reaction L-threonyl-[protein] + ATP = O-phospho-L-threonyl-[protein] + ADP + H(+). Its activity is regulated as follows. Activated by calcium. Autophosphorylation plays an important role in the regulation of the kinase activity. May play a role in signal transduction pathways that involve calcium as a second messenger. Acts as a developmentally controlled regulator for coordinated stem elongation and vascular development. Acts as a key component which contributes to the developmental switch that establishes the transition from vegetative to reproductive growth. Involved in pathogen-associated molecular pattern (PAMP)-triggered immunity (PTI) signaling. Interacts with and phosphorylates the kinase BIK1, a central rate-limiting kinase in PTI signaling. Facilitates BIK1 turnover and negatively regulates BIK1-mediated immune responses triggered by several PAMPs. Its kinase activity is necessary and sufficient for its function in PTI signaling. The chain is Calcium-dependent protein kinase 28 from Arabidopsis thaliana (Mouse-ear cress).